The following is a 1441-amino-acid chain: Pleiotropic drug resistance protein TUR2 (1441 aa).

Positions leucine 158–glutamate 430 constitute an ABC transporter 1 domain. ATP is bound at residue glycine 191 to threonine 198. Residues glutamate 508–phenylalanine 721 enclose the ABC transmembrane type-2 1 domain. The next 6 helical transmembrane spans lie at phenylalanine 526–phenylalanine 546, alanine 559–alanine 579, isoleucine 614–phenylalanine 634, leucine 646–glycine 666, valine 671–isoleucine 691, and isoleucine 756–leucine 776. An ABC transporter 2 domain is found at isoleucine 843–aspartate 1095. ATP is bound at residue glycine 888–threonine 895. In terms of domain architecture, ABC transmembrane type-2 2 spans methionine 1168–phenylalanine 1382. 7 helical membrane passes run tyrosine 1187–tryptophan 1207, threonine 1215–isoleucine 1235, valine 1275–phenylalanine 1295, phenylalanine 1302–methionine 1322, isoleucine 1332–isoleucine 1352, tryptophan 1363–glycine 1383, and valine 1413–isoleucine 1433.

The protein belongs to the ABC transporter superfamily. ABCG family. PDR (TC 3.A.1.205) subfamily. As to expression, ubiquitous.

It is found in the cell membrane. In terms of biological role, may be a general defense protein. Seems involved in turion (dormant buds) formation. Confers resistance to the diterpenoid antifungal agent sclareol. This chain is Pleiotropic drug resistance protein TUR2 (TUR2), found in Spirodela polyrhiza (Giant duckweed).